A 210-amino-acid chain; its full sequence is Thymidylate kinase (210 aa).

An ATP-binding site is contributed by 10 to 17; the sequence is GPEGAGKS.

Belongs to the thymidylate kinase family.

The enzyme catalyses dTMP + ATP = dTDP + ADP. Functionally, phosphorylation of dTMP to form dTDP in both de novo and salvage pathways of dTTP synthesis. The polypeptide is Thymidylate kinase (Pseudomonas syringae pv. syringae (strain B728a)).